Reading from the N-terminus, the 533-residue chain is Flavin-containing monooxygenase 5 (533 aa).

Residue R5 is modified to Dimethylated arginine. FAD is bound by residues 10-14, E33, and 41-42; these read GAGAS and LW. S54 carries the post-translational modification Phosphoserine. Y56 is modified (phosphotyrosine). S58 is subject to Phosphoserine. 62–63 contributes to the FAD binding site; the sequence is NT. 196 to 199 serves as a coordination point for NADP(+); that stretch reads SGGD. S280 bears the Phosphoserine mark. A Phosphothreonine modification is found at T284. S401 carries the phosphoserine modification. Residues 513–533 form a helical membrane-spanning segment; it reads MMTMGKFMLAIAFLAIAVVYF.

This sequence belongs to the FMO family. FAD serves as cofactor. Kidney and liver.

It localises to the microsome membrane. Its subcellular location is the endoplasmic reticulum membrane. It carries out the reaction N,N-dimethylaniline + NADPH + O2 + H(+) = N,N-dimethylaniline N-oxide + NADP(+) + H2O. It catalyses the reaction NADPH + O2 + H(+) = H2O2 + NADP(+). The enzyme catalyses heptan-2-one + NADPH + O2 + H(+) = pentyl acetate + NADP(+) + H2O. The catalysed reaction is octan-3-one + NADPH + O2 + H(+) = pentyl propanoate + NADP(+) + H2O. It carries out the reaction octan-3-one + NADPH + O2 + H(+) = ethyl hexanoate + NADP(+) + H2O. It catalyses the reaction hexan-3-one + NADPH + O2 + H(+) = ethyl butanoate + NADP(+) + H2O. The enzyme catalyses hexan-3-one + NADPH + O2 + H(+) = propyl propanoate + NADP(+) + H2O. The catalysed reaction is heptan-4-one + NADPH + O2 + H(+) = propyl butanoate + NADP(+) + H2O. It carries out the reaction (2E)-geranial + NADPH + O2 + H(+) = (1E)-2,6-dimethylhepta-1,5-dien-1-yl formate + NADP(+) + H2O. It catalyses the reaction sulcatone + NADPH + O2 + H(+) = 4-methylpent-3-en-1-yl acetate + NADP(+) + H2O. Acts as a Baeyer-Villiger monooxygenase on a broad range of substrates. Catalyzes the insertion of an oxygen atom into a carbon-carbon bond adjacent to a carbonyl, which converts ketones to esters. Active on diverse carbonyl compounds, whereas soft nucleophiles are mostly non- or poorly reactive. In contrast with other forms of FMO it is non- or poorly active on 'classical' substrates such as drugs, pesticides, and dietary components containing soft nucleophilic heteroatoms. Able to oxidize drug molecules bearing a carbonyl group on an aliphatic chain, such as nabumetone and pentoxifylline. Also, in the absence of substrates, shows slow but yet significant NADPH oxidase activity. Acts as a positive modulator of cholesterol biosynthesis as well as glucose homeostasis, promoting metabolic aging via pleiotropic effects. This is Flavin-containing monooxygenase 5 (FMO5) from Oryctolagus cuniculus (Rabbit).